The primary structure comprises 558 residues: Xylulose kinase 2 (558 aa).

Residues Asp-16, 20-23 (QSMK), Ser-111, and Asp-283 each bind substrate. Residues Thr-305 and 456 to 460 (GASAN) contribute to the ATP site.

Belongs to the FGGY kinase family. It depends on a divalent metal cation as a cofactor.

It is found in the cytoplasm. It carries out the reaction D-xylulose + ATP = D-xylulose 5-phosphate + ADP + H(+). It participates in isoprenoid biosynthesis; carotenoid biosynthesis. Repressed by oxo-clomazone (keto-clomazone), a bleaching herbicide. Functionally, mediates 1-deoxy-D-xylulose (DX) phosphorylation in the cytoplasm prior to the translocation of 1-deoxy-D-xylulose 5-phosphate into plastids. Can also phosphorylate D-xylulose (Xyl). Uses preferentially ATP as cosubstrate. This is Xylulose kinase 2 from Arabidopsis thaliana (Mouse-ear cress).